Reading from the N-terminus, the 407-residue chain is uncharacterized protein (407 aa).

The N-terminal stretch at 1–27 (MRILAMTRAHNAGRTLAATLDSLAVFS) is a signal peptide.

This is an uncharacterized protein from Mycobacterium bovis (strain ATCC BAA-935 / AF2122/97).